The chain runs to 315 residues: Acetyl-coenzyme A carboxylase carboxyl transferase subunit alpha (315 aa).

One can recognise a CoA carboxyltransferase C-terminal domain in the interval 32 to 289 (EIDLLEASLE…KQAFVDQLEQ (258 aa)).

The protein belongs to the AccA family. Acetyl-CoA carboxylase is a heterohexamer composed of biotin carboxyl carrier protein (AccB), biotin carboxylase (AccC) and two subunits each of ACCase subunit alpha (AccA) and ACCase subunit beta (AccD).

It localises to the cytoplasm. It catalyses the reaction N(6)-carboxybiotinyl-L-lysyl-[protein] + acetyl-CoA = N(6)-biotinyl-L-lysyl-[protein] + malonyl-CoA. The protein operates within lipid metabolism; malonyl-CoA biosynthesis; malonyl-CoA from acetyl-CoA: step 1/1. In terms of biological role, component of the acetyl coenzyme A carboxylase (ACC) complex. First, biotin carboxylase catalyzes the carboxylation of biotin on its carrier protein (BCCP) and then the CO(2) group is transferred by the carboxyltransferase to acetyl-CoA to form malonyl-CoA. The sequence is that of Acetyl-coenzyme A carboxylase carboxyl transferase subunit alpha from Staphylococcus haemolyticus (strain JCSC1435).